The chain runs to 378 residues: uncharacterized protein (378 aa).

This is an uncharacterized protein from Orgyia pseudotsugata multicapsid polyhedrosis virus (OpMNPV).